We begin with the raw amino-acid sequence, 381 residues long: Succinyl-diaminopimelate desuccinylase (381 aa).

His69 is a Zn(2+) binding site. Asp71 is a catalytic residue. Residue Asp103 participates in Zn(2+) binding. The Proton acceptor role is filled by Glu137. Residues Glu138, Glu166, and His355 each contribute to the Zn(2+) site.

The protein belongs to the peptidase M20A family. DapE subfamily. As to quaternary structure, homodimer. Zn(2+) serves as cofactor. It depends on Co(2+) as a cofactor.

The enzyme catalyses N-succinyl-(2S,6S)-2,6-diaminopimelate + H2O = (2S,6S)-2,6-diaminopimelate + succinate. The protein operates within amino-acid biosynthesis; L-lysine biosynthesis via DAP pathway; LL-2,6-diaminopimelate from (S)-tetrahydrodipicolinate (succinylase route): step 3/3. Functionally, catalyzes the hydrolysis of N-succinyl-L,L-diaminopimelic acid (SDAP), forming succinate and LL-2,6-diaminopimelate (DAP), an intermediate involved in the bacterial biosynthesis of lysine and meso-diaminopimelic acid, an essential component of bacterial cell walls. This is Succinyl-diaminopimelate desuccinylase from Rickettsia felis (strain ATCC VR-1525 / URRWXCal2) (Rickettsia azadi).